Consider the following 476-residue polypeptide: Bifunctional protein HldE (476 aa).

The interval 1-319 (MKISLPAFEK…AALNLSHGES (319 aa)) is ribokinase. Residue 195-198 (NMSE) coordinates ATP. Asp-264 is an active-site residue. Positions 345–476 (MTNGCFDILH…AIIENIMAKQ (132 aa)) are cytidylyltransferase.

In the N-terminal section; belongs to the carbohydrate kinase PfkB family. It in the C-terminal section; belongs to the cytidylyltransferase family. In terms of assembly, homodimer.

The catalysed reaction is D-glycero-beta-D-manno-heptose 7-phosphate + ATP = D-glycero-beta-D-manno-heptose 1,7-bisphosphate + ADP + H(+). It catalyses the reaction D-glycero-beta-D-manno-heptose 1-phosphate + ATP + H(+) = ADP-D-glycero-beta-D-manno-heptose + diphosphate. It functions in the pathway nucleotide-sugar biosynthesis; ADP-L-glycero-beta-D-manno-heptose biosynthesis; ADP-L-glycero-beta-D-manno-heptose from D-glycero-beta-D-manno-heptose 7-phosphate: step 1/4. It participates in nucleotide-sugar biosynthesis; ADP-L-glycero-beta-D-manno-heptose biosynthesis; ADP-L-glycero-beta-D-manno-heptose from D-glycero-beta-D-manno-heptose 7-phosphate: step 3/4. Its function is as follows. Catalyzes the phosphorylation of D-glycero-D-manno-heptose 7-phosphate at the C-1 position to selectively form D-glycero-beta-D-manno-heptose-1,7-bisphosphate. Functionally, catalyzes the ADP transfer from ATP to D-glycero-beta-D-manno-heptose 1-phosphate, yielding ADP-D-glycero-beta-D-manno-heptose. The polypeptide is Bifunctional protein HldE (Shewanella loihica (strain ATCC BAA-1088 / PV-4)).